Reading from the N-terminus, the 271-residue chain is Phosphatidylinositol transfer protein beta isoform (271 aa).

At Lys215 the chain carries N6-acetyllysine. The residue at position 262 (Ser262) is a Phosphoserine.

Belongs to the PtdIns transfer protein family. PI transfer class I subfamily. In terms of processing, constitutive phosphorylation of Ser-262 has no effect on phospholipid transfer activity but is required for Golgi targeting. In terms of tissue distribution, expressed abundantly in brain, kidney, liver, and lung, but in a lesser amount in testis.

Its subcellular location is the golgi apparatus. It localises to the golgi apparatus membrane. It is found in the endoplasmic reticulum membrane. It catalyses the reaction a 1,2-diacyl-sn-glycero-3-phosphocholine(in) = a 1,2-diacyl-sn-glycero-3-phosphocholine(out). The enzyme catalyses a 1,2-diacyl-sn-glycero-3-phospho-(1D-myo-inositol)(in) = a 1,2-diacyl-sn-glycero-3-phospho-(1D-myo-inositol)(out). It carries out the reaction an N-(acyl)-sphingosylphosphocholine(in) = an N-(acyl)-sphingosylphosphocholine(out). Phosphatidylinositol transfer activity is inhibited by N-ethylmaleimide. Functionally, catalyzes the transfer of phosphatidylinositol between membranes. Also catalyzes the transfer of phosphatidylcholine and sphingomyelin between membranes. Required for COPI-mediated retrograde transport from the Golgi to the endoplasmic reticulum; phosphatidylinositol and phosphatidylcholine transfer activity is essential for this function. This Rattus norvegicus (Rat) protein is Phosphatidylinositol transfer protein beta isoform (Pitpnb).